We begin with the raw amino-acid sequence, 292 residues long: 5,10-methylenetetrahydrofolate reductase (292 aa).

The active-site Proton donor/acceptor is the Glu28. Thr59 is an NADH binding site. FAD contacts are provided by Tyr60, Ala62, His88, Arg118, Gly119, Asp120, Ala132, Tyr152, His156, Asp165, Asn168, Lys171, and Lys172. A (6S)-5-methyl-5,6,7,8-tetrahydrofolate-binding site is contributed by Asp120. NADH is bound at residue Gln183. Residues Gln183, Gln219, and Lys279 each coordinate (6S)-5-methyl-5,6,7,8-tetrahydrofolate.

The protein belongs to the methylenetetrahydrofolate reductase family. Requires FAD as cofactor.

It carries out the reaction (6S)-5-methyl-5,6,7,8-tetrahydrofolate + NAD(+) = (6R)-5,10-methylene-5,6,7,8-tetrahydrofolate + NADH + H(+). It participates in one-carbon metabolism; tetrahydrofolate interconversion. The protein operates within amino-acid biosynthesis; L-methionine biosynthesis via de novo pathway. Catalyzes the NADH-dependent reduction of 5,10-methylenetetrahydrofolate to 5-methyltetrahydrofolate. Is required to provide the methyl group necessary for methionine synthetase to convert homocysteine to methionine; the methyl group is given by 5-methyltetrahydrofolate. The polypeptide is 5,10-methylenetetrahydrofolate reductase (metF) (Buchnera aphidicola subsp. Schizaphis graminum (strain Sg)).